Here is a 311-residue protein sequence, read N- to C-terminus: MPRTADDSWDIATSVGATAVMVALARAAETASETPLIRDQFAEPLVSTPELAAVREQVAAWWAQTDDDDDPDFTVDSQQMTDYLAVRTHFFDSYFIDAVAAGIRQVVILAAGLDSRAYRLDWPGGTMVYEIDLPKVLDYKEHTLARHGAAPVAALRAVPVDLRHDWPQALRDAGFQTSLPTAWLAEGLLPFLPAAAQHALFTAIDANSATGSRVAVEMFGVDEDARRAAEERAQRWARQRAKRQARGQDTSFDPFDLWFDDEGQPDPADWFAAHGWTTDSVQVGAEALRLGRTATSQEGPFVNRFVTAGKP.

Residues D132 and D161–L162 each bind S-adenosyl-L-methionine.

It belongs to the UPF0677 family.

Its function is as follows. Exhibits S-adenosyl-L-methionine-dependent methyltransferase activity. This Mycobacterium ulcerans (strain Agy99) protein is Putative S-adenosyl-L-methionine-dependent methyltransferase MUL_4761.